Reading from the N-terminus, the 171-residue chain is Lipoprotein signal peptidase (171 aa).

The next 3 membrane-spanning stretches (helical) occupy residues 7–27, 64–84, and 88–108; these read GLLA…GLYF, IGRW…GLWM, and TSRL…GNAI. Catalysis depends on residues D118 and D136. Residues 128–148 traverse the membrane as a helical segment; the sequence is SWYVFNVADAAIVAGVIGLIL.

The protein belongs to the peptidase A8 family.

It localises to the cell inner membrane. The catalysed reaction is Release of signal peptides from bacterial membrane prolipoproteins. Hydrolyzes -Xaa-Yaa-Zaa-|-(S,diacylglyceryl)Cys-, in which Xaa is hydrophobic (preferably Leu), and Yaa (Ala or Ser) and Zaa (Gly or Ala) have small, neutral side chains.. The protein operates within protein modification; lipoprotein biosynthesis (signal peptide cleavage). Its function is as follows. This protein specifically catalyzes the removal of signal peptides from prolipoproteins. The protein is Lipoprotein signal peptidase of Methylobacterium radiotolerans (strain ATCC 27329 / DSM 1819 / JCM 2831 / NBRC 15690 / NCIMB 10815 / 0-1).